Here is a 282-residue protein sequence, read N- to C-terminus: Farnesyl diphosphate synthase (282 aa).

Residues Lys-45, Arg-48, and His-77 each contribute to the isopentenyl diphosphate site. Residues Asp-84 and Asp-90 each contribute to the Mg(2+) site. A (2E)-geranyl diphosphate-binding site is contributed by Arg-95. An isopentenyl diphosphate-binding site is contributed by Arg-96. Lys-181, Thr-182, and Gln-220 together coordinate (2E)-geranyl diphosphate.

Belongs to the FPP/GGPP synthase family. It depends on Mg(2+) as a cofactor.

It is found in the cytoplasm. It catalyses the reaction isopentenyl diphosphate + (2E)-geranyl diphosphate = (2E,6E)-farnesyl diphosphate + diphosphate. This is Farnesyl diphosphate synthase (ispA) from Buchnera aphidicola subsp. Acyrthosiphon pisum (strain APS) (Acyrthosiphon pisum symbiotic bacterium).